Reading from the N-terminus, the 392-residue chain is Y' element ATP-dependent helicase YFL066C (392 aa).

The Helicase ATP-binding domain occupies 1 to 175 (MADTPSVAVQ…LQRIGLTGLA (175 aa)). Residue 11-18 (APPGYGKT) coordinates ATP. The Helicase C-terminal domain occupies 232–381 (KLLLALFEIE…EFYGLESKKG (150 aa)).

It belongs to the helicase family. Yeast subtelomeric Y' repeat subfamily.

Functionally, catalyzes DNA unwinding and is involved in telomerase-independent telomere maintenance. In Saccharomyces cerevisiae (strain ATCC 204508 / S288c) (Baker's yeast), this protein is Y' element ATP-dependent helicase YFL066C.